We begin with the raw amino-acid sequence, 545 residues long: Zinc finger protein with KRAB and SCAN domains 4 (545 aa).

The tract at residues 1–22 is disordered; the sequence is MAREPRKNAALDAQSAEDQTGL. Glycyl lysine isopeptide (Lys-Gly) (interchain with G-Cter in SUMO2) cross-links involve residues Lys-26 and Lys-29. Residues 34 to 55 form a disordered region; it reads ALTAEVRAPCSPARGPERSRQR. An SCAN box domain is found at 53–135; sequence RQRFRGFRYP…VLLEYLERQL (83 aa). Glycyl lysine isopeptide (Lys-Gly) (interchain with G-Cter in SUMO2) cross-links involve residues Lys-178 and Lys-222. Residues 221 to 317 form the KRAB domain; the sequence is LKMEDVALTL…QRKQKNAIGS (97 aa). C2H2-type zinc fingers lie at residues 320-342, 348-370, 376-398, 404-426, and 432-454; these read HYCH…RRIH, YECE…QRVH, YECE…QRTH, YECD…HKIH, and YQCN…QRIH. The span at 455–467 shows a compositional bias: basic and acidic residues; sequence GDKNVQNPEHGES. A disordered region spans residues 455–480; it reads GDKNVQNPEHGESWESQGRTESQWEN. Polar residues predominate over residues 468–480; sequence WESQGRTESQWEN. 2 consecutive C2H2-type zinc fingers follow at residues 487 to 509 and 515 to 537; these read YKCN…QKIH and YQCD…QRSH.

The protein belongs to the krueppel C2H2-type zinc-finger protein family. As to expression, expressed in adult heart, brain, placenta, lung and kidney, but not in adult liver and skeletal muscle. In 17-day old embryo, detected in liver, skeletal muscle, brain, heart and small intestine.

It is found in the nucleus. In terms of biological role, may be involved in the transcriptional activation of MDM2 and EP300 genes. In Homo sapiens (Human), this protein is Zinc finger protein with KRAB and SCAN domains 4 (ZKSCAN4).